Reading from the N-terminus, the 700-residue chain is Elongation factor G (700 aa).

The region spanning 10–286 (TKVRNIGIMA…AVIDYLPNPL (277 aa)) is the tr-type G domain. Residues 19-26 (AHIDAGKT), 83-87 (DTPGH), and 137-140 (NKMD) each bind GTP.

The protein belongs to the TRAFAC class translation factor GTPase superfamily. Classic translation factor GTPase family. EF-G/EF-2 subfamily.

The protein resides in the cytoplasm. In terms of biological role, catalyzes the GTP-dependent ribosomal translocation step during translation elongation. During this step, the ribosome changes from the pre-translocational (PRE) to the post-translocational (POST) state as the newly formed A-site-bound peptidyl-tRNA and P-site-bound deacylated tRNA move to the P and E sites, respectively. Catalyzes the coordinated movement of the two tRNA molecules, the mRNA and conformational changes in the ribosome. This is Elongation factor G from Mycolicibacterium vanbaalenii (strain DSM 7251 / JCM 13017 / BCRC 16820 / KCTC 9966 / NRRL B-24157 / PYR-1) (Mycobacterium vanbaalenii).